The sequence spans 79 residues: Conotoxin Tr6.2 (79 aa).

The first 22 residues, 1–22 (MKLTCVLIISVLFLTASQLITA), serve as a signal peptide directing secretion. Positions 23–47 (VYSRDKQQYRAARLRDEMRNLKGAR) are excised as a propeptide. 3 disulfide bridges follow: Cys49-Cys62, Cys56-Cys67, and Cys61-Cys77. 4-hydroxyproline occurs at positions 60 and 63.

The protein belongs to the conotoxin O1 superfamily. Expressed by the venom duct.

Its subcellular location is the secreted. Functionally, ion channel inhibitor that inhibits the increase in intracellular calcium upon depolarization in DRG neurons. In vivo, both intraperitoneal and intracranial injections into mice induce hyperactivity. In Conus terebra (Sea snail), this protein is Conotoxin Tr6.2.